A 457-amino-acid polypeptide reads, in one-letter code: UDP-N-acetylmuramoylalanine--D-glutamate ligase (457 aa).

Residue 116-122 coordinates ATP; that stretch reads GTNGKTT.

It belongs to the MurCDEF family.

The protein localises to the cytoplasm. It catalyses the reaction UDP-N-acetyl-alpha-D-muramoyl-L-alanine + D-glutamate + ATP = UDP-N-acetyl-alpha-D-muramoyl-L-alanyl-D-glutamate + ADP + phosphate + H(+). Its pathway is cell wall biogenesis; peptidoglycan biosynthesis. Cell wall formation. Catalyzes the addition of glutamate to the nucleotide precursor UDP-N-acetylmuramoyl-L-alanine (UMA). This chain is UDP-N-acetylmuramoylalanine--D-glutamate ligase, found in Caldicellulosiruptor bescii (strain ATCC BAA-1888 / DSM 6725 / KCTC 15123 / Z-1320) (Anaerocellum thermophilum).